The primary structure comprises 146 residues: Ribosome maturation factor RimP (146 aa).

It belongs to the RimP family.

The protein resides in the cytoplasm. Functionally, required for maturation of 30S ribosomal subunits. The polypeptide is Ribosome maturation factor RimP (Helicobacter pylori (strain HPAG1)).